The chain runs to 576 residues: Proline--tRNA ligase (576 aa).

Belongs to the class-II aminoacyl-tRNA synthetase family. ProS type 1 subfamily. In terms of assembly, homodimer.

The protein resides in the cytoplasm. It carries out the reaction tRNA(Pro) + L-proline + ATP = L-prolyl-tRNA(Pro) + AMP + diphosphate. Functionally, catalyzes the attachment of proline to tRNA(Pro) in a two-step reaction: proline is first activated by ATP to form Pro-AMP and then transferred to the acceptor end of tRNA(Pro). As ProRS can inadvertently accommodate and process non-cognate amino acids such as alanine and cysteine, to avoid such errors it has two additional distinct editing activities against alanine. One activity is designated as 'pretransfer' editing and involves the tRNA(Pro)-independent hydrolysis of activated Ala-AMP. The other activity is designated 'posttransfer' editing and involves deacylation of mischarged Ala-tRNA(Pro). The misacylated Cys-tRNA(Pro) is not edited by ProRS. This Bordetella pertussis (strain Tohama I / ATCC BAA-589 / NCTC 13251) protein is Proline--tRNA ligase.